Reading from the N-terminus, the 417-residue chain is D-inositol 3-phosphate glycosyltransferase (417 aa).

H15 provides a ligand contact to 1D-myo-inositol 3-phosphate. UDP-N-acetyl-alpha-D-glucosamine-binding positions include 21–22 (QP) and G29. Residues 26–31 (DAGGMN), K84, Y117, T141, and R161 each bind 1D-myo-inositol 3-phosphate. UDP-N-acetyl-alpha-D-glucosamine is bound by residues R241, K246, and V299. The Mg(2+) site is built by Y308, R309, and A311. UDP-N-acetyl-alpha-D-glucosamine-binding residues include E321 and E329. A Mg(2+)-binding site is contributed by T335.

The protein belongs to the glycosyltransferase group 1 family. MshA subfamily. In terms of assembly, homodimer.

It carries out the reaction 1D-myo-inositol 3-phosphate + UDP-N-acetyl-alpha-D-glucosamine = 1D-myo-inositol 2-acetamido-2-deoxy-alpha-D-glucopyranoside 3-phosphate + UDP + H(+). Its function is as follows. Catalyzes the transfer of a N-acetyl-glucosamine moiety to 1D-myo-inositol 3-phosphate to produce 1D-myo-inositol 2-acetamido-2-deoxy-glucopyranoside 3-phosphate in the mycothiol biosynthesis pathway. The sequence is that of D-inositol 3-phosphate glycosyltransferase from Xylanimonas cellulosilytica (strain DSM 15894 / JCM 12276 / CECT 5975 / KCTC 9989 / LMG 20990 / NBRC 107835 / XIL07).